We begin with the raw amino-acid sequence, 569 residues long: Glutamate--tRNA ligase (569 aa).

Positions 99–109 (PEPNGYPTLGH) match the 'HIGH' region motif.

It belongs to the class-I aminoacyl-tRNA synthetase family. Glutamate--tRNA ligase type 2 subfamily.

The protein localises to the cytoplasm. It carries out the reaction tRNA(Glu) + L-glutamate + ATP = L-glutamyl-tRNA(Glu) + AMP + diphosphate. In terms of biological role, catalyzes the attachment of glutamate to tRNA(Glu) in a two-step reaction: glutamate is first activated by ATP to form Glu-AMP and then transferred to the acceptor end of tRNA(Glu). The chain is Glutamate--tRNA ligase from Korarchaeum cryptofilum (strain OPF8).